The chain runs to 328 residues: Phosphate acetyltransferase (328 aa).

It belongs to the phosphate acetyltransferase and butyryltransferase family.

The protein resides in the cytoplasm. The catalysed reaction is acetyl-CoA + phosphate = acetyl phosphate + CoA. The protein operates within metabolic intermediate biosynthesis; acetyl-CoA biosynthesis; acetyl-CoA from acetate: step 2/2. This is Phosphate acetyltransferase (pta) from Thermoanaerobacterium thermosaccharolyticum (strain ATCC 7956 / DSM 571 / NCIMB 9385 / NCA 3814 / NCTC 13789 / WDCM 00135 / 2032) (Clostridium thermosaccharolyticum).